A 460-amino-acid polypeptide reads, in one-letter code: MKESNSRREFLSQSGKMVTAAALFGTSVPLAHAAVAGTLNCEANNTMKITDPHYYLDNVLLETGFDYENGVAVQTRTARQTVEIQDGKIVALRENKLHPDATLPHYDAGGKLMLPTTRDMHIHLDKTFYGGPWRSLNRPAGTTIQDMIKLEQKMLPELQPYTQERAEKLIDLLQSKGTTIARSHCNIEPVSGLKNLQNLQAVLARRQAGFECEIVAFPQHGLLLSKSEPLMREAMQAGAHYVGGLDPTSVDGAMEKSLDTMFQIALDYDKGVDIHLHETTPAGVAAINYMVETVEKTPQLKGKLTISHAFALATLNEQQVDELANRMVVQQISIASTVPIGTLHMPLKQLHDKGVKVMTGTDSVIDHWSPYGLGDMLEKANLYAQLYIRPNEQNLSRSLFLATGDVLPLNEKGERVWPKAQDDASFVLVDASCSAEAVARISPRTATFHKGQLVWGSVAG.

Positions 1-33 (MKESNSRREFLSQSGKMVTAAALFGTSVPLAHA) form a signal peptide, tat-type signal.

It belongs to the metallo-dependent hydrolases superfamily. Exported by the Tat system. The position of the signal peptide cleavage has not been experimentally proven. Can also be exported by the Sec system.

This is an uncharacterized protein from Escherichia coli (strain K12).